A 906-amino-acid polypeptide reads, in one-letter code: Protein translocase subunit SecA (906 aa).

Residues glutamine 87, 105 to 109, and aspartate 512 contribute to the ATP site; that span reads GEGKT. The segment at 875–897 is disordered; that stretch reads VTFVRDEQKVGRNDPCPCGSGKK. Cysteine 890, cysteine 892, cysteine 901, and histidine 902 together coordinate Zn(2+).

This sequence belongs to the SecA family. In terms of assembly, monomer and homodimer. Part of the essential Sec protein translocation apparatus which comprises SecA, SecYEG and auxiliary proteins SecDF-YajC and YidC. Zn(2+) is required as a cofactor.

The protein localises to the cell inner membrane. Its subcellular location is the cytoplasm. It catalyses the reaction ATP + H2O + cellular proteinSide 1 = ADP + phosphate + cellular proteinSide 2.. Part of the Sec protein translocase complex. Interacts with the SecYEG preprotein conducting channel. Has a central role in coupling the hydrolysis of ATP to the transfer of proteins into and across the cell membrane, serving both as a receptor for the preprotein-SecB complex and as an ATP-driven molecular motor driving the stepwise translocation of polypeptide chains across the membrane. This is Protein translocase subunit SecA from Aeromonas hydrophila subsp. hydrophila (strain ATCC 7966 / DSM 30187 / BCRC 13018 / CCUG 14551 / JCM 1027 / KCTC 2358 / NCIMB 9240 / NCTC 8049).